A 110-amino-acid chain; its full sequence is uncharacterized protein (110 aa).

Residues leucine 88–leucine 108 traverse the membrane as a helical segment.

It is found in the membrane. This is an uncharacterized protein from Rickettsia prowazekii (strain Madrid E).